Reading from the N-terminus, the 116-residue chain is Large ribosomal subunit protein uL22 (116 aa).

It belongs to the universal ribosomal protein uL22 family. Part of the 50S ribosomal subunit.

This protein binds specifically to 23S rRNA; its binding is stimulated by other ribosomal proteins, e.g. L4, L17, and L20. It is important during the early stages of 50S assembly. It makes multiple contacts with different domains of the 23S rRNA in the assembled 50S subunit and ribosome. In terms of biological role, the globular domain of the protein is located near the polypeptide exit tunnel on the outside of the subunit, while an extended beta-hairpin is found that lines the wall of the exit tunnel in the center of the 70S ribosome. This is Large ribosomal subunit protein uL22 from Sulfurihydrogenibium sp. (strain YO3AOP1).